A 483-amino-acid chain; its full sequence is UDP-N-acetylmuramoyl-L-alanyl-D-glutamate--2,6-diaminopimelate ligase (483 aa).

UDP-N-acetyl-alpha-D-muramoyl-L-alanyl-D-glutamate is bound at residue Ser-30. 109–115 is a binding site for ATP; the sequence is GTNGKTT. UDP-N-acetyl-alpha-D-muramoyl-L-alanyl-D-glutamate is bound by residues 151-152, Ser-178, and Arg-186; that span reads TT. Lys-218 carries the N6-carboxylysine modification. Residues Arg-380, 403–406, Gly-453, and Glu-457 contribute to the meso-2,6-diaminopimelate site; that span reads DNPR. Positions 403–406 match the Meso-diaminopimelate recognition motif motif; that stretch reads DNPR.

The protein belongs to the MurCDEF family. MurE subfamily. Mg(2+) serves as cofactor. Post-translationally, carboxylation is probably crucial for Mg(2+) binding and, consequently, for the gamma-phosphate positioning of ATP.

The protein localises to the cytoplasm. It catalyses the reaction UDP-N-acetyl-alpha-D-muramoyl-L-alanyl-D-glutamate + meso-2,6-diaminopimelate + ATP = UDP-N-acetyl-alpha-D-muramoyl-L-alanyl-gamma-D-glutamyl-meso-2,6-diaminopimelate + ADP + phosphate + H(+). Its pathway is cell wall biogenesis; peptidoglycan biosynthesis. Functionally, catalyzes the addition of meso-diaminopimelic acid to the nucleotide precursor UDP-N-acetylmuramoyl-L-alanyl-D-glutamate (UMAG) in the biosynthesis of bacterial cell-wall peptidoglycan. This is UDP-N-acetylmuramoyl-L-alanyl-D-glutamate--2,6-diaminopimelate ligase from Chlamydia caviae (strain ATCC VR-813 / DSM 19441 / 03DC25 / GPIC) (Chlamydophila caviae).